A 141-amino-acid polypeptide reads, in one-letter code: Protein KRTCAP2 homolog (141 aa).

4 helical membrane-spanning segments follow: residues 11 to 31, 42 to 62, 74 to 94, and 97 to 117; these read VVSSIISGLLSIVLFGTLRFC, VLLGGYLFSWVFILSLTCVSN, AKLLPEIIFCLSLTVAAAGLV, and VCATTSVLFSLVGLYFLNRIS.

The protein belongs to the KRTCAP2 family. Component of the oligosaccharyltransferase (OST) complex.

Its subcellular location is the membrane. Subunit of the oligosaccharyl transferase (OST) complex that catalyzes the initial transfer of a defined glycan (Glc(3)Man(9)GlcNAc(2) in eukaryotes) from the lipid carrier dolichol-pyrophosphate to an asparagine residue within an Asn-X-Ser/Thr consensus motif in nascent polypeptide chains, the first step in protein N-glycosylation. N-glycosylation occurs cotranslationally and the complex associates with the Sec61 complex at the channel-forming translocon complex that mediates protein translocation across the endoplasmic reticulum (ER). All subunits are required for a maximal enzyme activity. In Drosophila melanogaster (Fruit fly), this protein is Protein KRTCAP2 homolog.